Reading from the N-terminus, the 492-residue chain is Membrane-bound glycerophospholipid O-acyltransferase 1 (492 aa).

A run of 6 helical transmembrane segments spans residues 33–53 (VNFVACQLFALSAAFWFRIYL), 69–89 (ILGIYFVVFCFGWYAVHLFVL), 125–145 (IYIFHYGILTTDFSGPLMIVT), 179–199 (PSLLEYLSYHLNFMSVIAGPC), 237–257 (MGAVIQKLCVTLMSLLLFLTL), and 296–316 (YFAWTLADAVHNAAGFGFNGM). Active-site residues include asparagine 349 and histidine 380. 3 helical membrane passes run 370–390 (VLTFLLSALWHGVYPGYYFTF), 423–443 (VVTWAVTQLAVSYTAAPFVML), and 452–472 (YKSVFFFLHIICLLIILFLPI). Serine 486 carries the post-translational modification Phosphoserine.

The protein belongs to the membrane-bound acyltransferase family. As to expression, highly expressed in stomach, epididymis, and colon.

Its subcellular location is the endoplasmic reticulum membrane. The catalysed reaction is a 1-acyl-sn-glycero-3-phosphoethanolamine + an acyl-CoA = a 1,2-diacyl-sn-glycero-3-phosphoethanolamine + CoA. It catalyses the reaction a 1-acyl-sn-glycero-3-phospho-L-serine + an acyl-CoA = a 1,2-diacyl-sn-glycero-3-phospho-L-serine + CoA. The enzyme catalyses a 1-acyl-sn-glycero-3-phosphocholine + an acyl-CoA = a 1,2-diacyl-sn-glycero-3-phosphocholine + CoA. It carries out the reaction a 1-O-(1Z-alkenyl)-sn-glycero-3-phosphoethanolamine + (9Z)-octadecenoyl-CoA = 1-O-(1Z)-alkenyl-2-(9Z)-octadecenoyl-sn-glycero-3-phosphoethanolamine + CoA. The catalysed reaction is 1-octadecanoyl-sn-glycero-3-phosphoethanolamine + (9Z)-octadecenoyl-CoA = 1-octadecanoyl-2-(9Z-octadecenoyl)-sn-glycero-3-phosphoethanolamine + CoA. It catalyses the reaction 1-(9Z-octadecenoyl)-sn-glycero-3-phospho-L-serine + (9Z)-octadecenoyl-CoA = 1,2-di-(9Z)-octadecenoyl-sn-glycero-3-phospho-L-serine + CoA. The enzyme catalyses 1-(9Z-octadecenoyl)-sn-glycero-3-phosphoethanolamine + (9Z)-octadecenoyl-CoA = 1,2-di-(9Z-octadecenoyl)-sn-glycero-3-phosphoethanolamine + CoA. It carries out the reaction 1-hexadecanoyl-sn-glycero-3-phosphoethanolamine + (9Z)-octadecenoyl-CoA = 1-hexadecanoyl-2-(9Z-octadecenoyl)-sn-glycero-3-phosphoethanolamine + CoA. The catalysed reaction is 1-(10Z-heptadecenoyl)-sn-glycero-3-phosphoethanolamine + hexadecanoyl-CoA = 1-(10Z-heptadecenoyl)-2-hexadecanoyl-sn-glycero-3-phosphoethanolamine + CoA. It catalyses the reaction 1-(9Z-octadecenoyl)-sn-glycero-3-phospho-L-serine + octadecanoyl-CoA = 1-(9Z-octadecenoyl)-2-octadecanoyl-sn-glycero-3-phospho-L-serine + CoA. The enzyme catalyses 1-(9Z-octadecenoyl)-sn-glycero-3-phospho-L-serine + (9Z)-hexadecenoyl-CoA = 1-(9Z-octadecenoyl)-2-(9Z-hexadecenoyl)-sn-glycero-3-phospho-L-serine + CoA. It carries out the reaction 1-(9Z-octadecenoyl)-sn-glycero-3-phospho-L-serine + (9Z,12Z)-octadecadienoyl-CoA = 1-(9Z-octadecenoyl)-2-(9Z,12Z-octadienoyl)-sn-glycero-3-phospho-L-serine + CoA. The catalysed reaction is 1-hexadecanoyl-sn-glycero-3-phosphocholine + (9Z)-octadecenoyl-CoA = 1-hexadecanoyl-2-(9Z-octadecenoyl)-sn-glycero-3-phosphocholine + CoA. It catalyses the reaction 1-(10Z-heptadecenoyl)-sn-glycero-3-phosphoethanolamine + (9Z)-octadecenoyl-CoA = 1-(10Z-heptadecenoyl)-2-(9Z-octadecenoyl)-sn-glycero-3-phosphoethanolamine + CoA. The protein operates within lipid metabolism; phospholipid metabolism. Its function is as follows. Acyltransferase which catalyzes the transfer of an acyl group from an acyl-CoA towards a lysophospholipid producing a phospholipid and participates in the reacylation step of the phospholipid remodeling pathway also known as the Lands cycle. Acts on lysophosphatidylserine (1-acyl-2-hydroxy-sn-glycero-3-phospho-L-serine or LPS) and lysophosphatidylethanolamine (1-acyl-sn-glycero-3-phosphoethanolamine or LPE), and to a lesser extend lysophosphatidylcholine. Prefers oleoyl-CoA as the acyl donor and 1-oleoyl-LPE as acceptor. May play a role in neurite outgrowth during neuronal differentiation. This Mus musculus (Mouse) protein is Membrane-bound glycerophospholipid O-acyltransferase 1.